The following is a 7214-amino-acid chain: Nonribosomal peptide synthetase atnA (7214 aa).

The interval 257 to 651 (ERKALEQPHA…VGRKDTQVKI (395 aa)) is adenylation 1. The Carrier 1 domain maps to 786–862 (EPVTETEKAV…AMSQIAVELS (77 aa)). Ser-823 is subject to O-(pantetheine 4'-phosphoryl)serine. Positions 899–1318 (EDAYPATALQ…LVSQKDYTQI (420 aa)) are condensation 1. The adenylation 2 stretch occupies residues 1340 to 1735 (QVLATPDAPA…ARKDTQAKVR (396 aa)). The Carrier 2 domain maps to 1877–1953 (QPTSDIEKKV…ALAGRAQYIE (77 aa)). At Ser-1914 the chain carries O-(pantetheine 4'-phosphoryl)serine. The interval 1962–2384 (PEAEVIDEWF…RQVLETGIDE (423 aa)) is epimerization. A condensation 2 region spans residues 2431–2845 (SPCSPMQLGL…MLSPLDRASL (415 aa)). An adenylation 3 region spans residues 2866–3262 (QNARKRPHAL…VGRKDTQVKV (397 aa)). The region spanning 3398–3472 (ALETPMEETI…DMARIVVAAY (75 aa)) is the Carrier 3 domain. O-(pantetheine 4'-phosphoryl)serine is present on Ser-3433. The interval 3510–3904 (VEDVYPSTSL…QLCENEDGRL (395 aa)) is condensation 3. Residues 3943–4339 (ERARLHPDLL…VGRKDSQVKL (397 aa)) are adenylation 4. Residues 4476 to 4552 (VPGSEAEKVI…ELAGRVTSIS (77 aa)) form the Carrier 4 domain. Position 4513 is an O-(pantetheine 4'-phosphoryl)serine (Ser-4513). The condensation 4 stretch occupies residues 4601-5033 (VEDVYPCSPL…TSAAMRAQLL (433 aa)). The tract at residues 5051–5446 (FHRTALRYPE…VGRKDTQIKF (396 aa)) is adenylation 5. Residues 5489–5515 (FITTEGGSGHENKGSPSLKGSSGDPVS) form a disordered region. The Carrier 5 domain occupies 5591-5667 (APRTAMEKRL…QMANIVARNA (77 aa)). Ser-5628 carries the post-translational modification O-(pantetheine 4'-phosphoryl)serine. The segment at 5707–6123 (QDVYPCTPLQ…HLLGDNEIKM (417 aa)) is condensation 5. Residues 6145–6543 (ERAVLQPEAI…GRKDTQIKLR (399 aa)) form an adenylation 6 region. A Carrier 6 domain is found at 6683-6766 (DPADKLALAL…DVARMIEHGN (84 aa)). Ser-6725 is subject to O-(pantetheine 4'-phosphoryl)serine. Residues 6814 to 7194 (ILLTGATGFL…KSISYMRQIG (381 aa)) are thioesterase (TE) domain. The disordered stretch occupies residues 6895 to 6915 (STVEGRDHPGSESGSTAGPAE).

It belongs to the NRP synthetase family.

It participates in secondary metabolite biosynthesis. Functionally, nonribosomal peptide synthetase; part of the gene cluster that mediates the biosynthesis of aspercryptins, linear lipopeptides built from six amino acids including 2 highly unusual and nonproteogenic amino acids, 2-amino-octanoic acid (2aoa) and 2-amino-dodecanol (2adol). The core structure of aspercryptins is as follows: Ser/Ala-Thr-Ile/Val-2aoa-Asn-2adol. The first step of aspercryptin biosynthesis is the generation of the fatty acid precursors, octanoic and dodecanoic acids, by the FAS subunits atnF and atnM. The fatty acid precursors are likely transformed into the corresponding alpha-amino fatty acids in three steps. First, they are hydroxylated by the cytochrome P450 monooxygenase atnE, then oxidized to the corresponding alpha-keto acids by the NAD(P)-dependent oxidoreductase atnD, and finally converted to the alpha-amino fatty acids by the PLP-dependent aminotransferases atnH or atnJ. the alpha-amino fatty acids, 2-amino-octanoic and 2-amino-dodecanoic acids, are recognized, activated, and covalently tethered to the NRPS atnA by its fourth and sixth adenylation domains. The second module of atnA is the Thr module and contains an epimerase (E) domain responsible for the epimerization of Thr to D-allo-Thr. Additionally, despite atnA having only one epimerase domain, the first amino acid of aspercryptin A1 is D-Ser, suggesting that serine is either loaded directly as D-Ser on the first module or that the epimerase domain in the threonine module epimerizes both L-Ser and L-Thr. After condensation of the hexapeptide of aspercryptin, the C-terminal reductase (TE) domain might be involved in the reductive release and production of the aldehyde hexapeptide. Further reduction would generate aspercryptins. The variety of aspercryptins produced reflects the flexibility of the atnA NRPS, allowing incorporation of alanine instead of serine, valine for isoleucine, and a C10 fatty amino alcohol instead of the C12 version. AtnB seems to be involved in the selectivity for Ile versus Val by the third module. Moreover, type B, C and D aspercryptins have an additional N-terminal cichorine, acetyl and propionyl group respectively. The chain is Nonribosomal peptide synthetase atnA from Emericella nidulans (strain FGSC A4 / ATCC 38163 / CBS 112.46 / NRRL 194 / M139) (Aspergillus nidulans).